Reading from the N-terminus, the 422-residue chain is UDP-N-acetylglucosamine 1-carboxyvinyltransferase (422 aa).

A phosphoenolpyruvate-binding site is contributed by Lys22 to Asn23. Position 92 (Arg92) interacts with UDP-N-acetyl-alpha-D-glucosamine. Cys116 acts as the Proton donor in catalysis. A 2-(S-cysteinyl)pyruvic acid O-phosphothioketal modification is found at Cys116. Residues Asp306 and Ile328 each contribute to the UDP-N-acetyl-alpha-D-glucosamine site.

Belongs to the EPSP synthase family. MurA subfamily.

It localises to the cytoplasm. It carries out the reaction phosphoenolpyruvate + UDP-N-acetyl-alpha-D-glucosamine = UDP-N-acetyl-3-O-(1-carboxyvinyl)-alpha-D-glucosamine + phosphate. It functions in the pathway cell wall biogenesis; peptidoglycan biosynthesis. Functionally, cell wall formation. Adds enolpyruvyl to UDP-N-acetylglucosamine. This Elusimicrobium minutum (strain Pei191) protein is UDP-N-acetylglucosamine 1-carboxyvinyltransferase.